A 332-amino-acid chain; its full sequence is MITFQDVSKTYAQGGHPALSGVSLSVKAGEVFGVIGASGAGKSTLIRLINGLETPSAGQVIVDGDDVAALGVAGLRALRRRVGMIFQHFNLLSGKTVAQNVAFPLKLAGRPAAEVKARTAELLERVGLSAHAGKYPAQLSGGQKQRVGIARALATNPKVLLCDEATSALDPETTEQILDLIAGLNRELGLTIVLITHEMDVVRRVCDRVAVLDAGRVVEEGAVEEVFLHPASDTARRFVREAEGDVTAAPGVGGRVVRLTFKGEATYKPVLGEVARATGVDYSILGGRIHRLRETPYGQLTLALTGGDVAAAIAQFQAAGVRVDALSGETAQ.

In terms of domain architecture, ABC transporter spans 2-239 (ITFQDVSKTY…PASDTARRFV (238 aa)). 36-43 (GASGAGKS) is a binding site for ATP.

The protein belongs to the ABC transporter superfamily. Methionine importer (TC 3.A.1.24) family. In terms of assembly, the complex is composed of two ATP-binding proteins (MetN), two transmembrane proteins (MetI) and a solute-binding protein (MetQ).

It localises to the cell inner membrane. The enzyme catalyses L-methionine(out) + ATP + H2O = L-methionine(in) + ADP + phosphate + H(+). It carries out the reaction D-methionine(out) + ATP + H2O = D-methionine(in) + ADP + phosphate + H(+). Functionally, part of the ABC transporter complex MetNIQ involved in methionine import. Responsible for energy coupling to the transport system. This Caulobacter vibrioides (strain ATCC 19089 / CIP 103742 / CB 15) (Caulobacter crescentus) protein is Methionine import ATP-binding protein MetN.